The primary structure comprises 387 residues: Sedoheptulose-1,7-bisphosphatase, chloroplastic (387 aa).

The cysteines at positions 109 and 114 are disulfide-linked. Mg(2+) contacts are provided by Asp120, Glu149, Asp170, Leu172, and Asp173. Residues 173–176 (DGSS), Tyr284, and Lys314 each bind substrate. Glu320 is a Mg(2+) binding site.

Belongs to the FBPase class 1 family. As to quaternary structure, homodimer. It depends on Mg(2+) as a cofactor.

It is found in the plastid. The protein localises to the chloroplast. The enzyme catalyses D-sedoheptulose 1,7-bisphosphate + H2O = D-sedoheptulose 7-phosphate + phosphate. It functions in the pathway carbohydrate biosynthesis; Calvin cycle. The sequence is that of Sedoheptulose-1,7-bisphosphatase, chloroplastic from Spinacia oleracea (Spinach).